Consider the following 557-residue polypeptide: Acid-sensing ion channel 1B (557 aa).

The Cytoplasmic portion of the chain corresponds to 1–98; it reads MVRITCTISF…SIRQGLWALV (98 aa). Over residues 36–45 the composition is skewed to basic and acidic residues; it reads KDGEQGKYQE. The segment at 36–57 is disordered; it reads KDGEQGKYQEEGDDPDAYDGPE. A compositionally biased stretch (acidic residues) spans 46–57; sequence EGDDPDAYDGPE. The chain crosses the membrane as a helical span at residues 99–115; sequence FLLAISMFLLQVVDRVI. Topologically, residues 116–460 are extracellular; that stretch reads YYLQYDYVTL…ETIEQKKAYE (345 aa). N133 and N194 each carry an N-linked (GlcNAc...) asparagine glycan. Disulfide bonds link C142–C229, C207–C214, C325–C400, C343–C396, C347–C394, C356–C378, and C358–C370. N401 and N428 each carry an N-linked (GlcNAc...) asparagine glycan. Residues 461–491 traverse the membrane as a discontinuously helical segment; that stretch reads LAGLLGDIGGQMGLFIGASILTILELFDYLY. Positions 477–479 match the GAS motif; ion selectivity filter motif; that stretch reads GAS. The Cytoplasmic segment spans residues 492 to 557; the sequence is EVIKFKLCRC…GQGNFEDFTC (66 aa).

Belongs to the amiloride-sensitive sodium channel (TC 1.A.6) family. ASIC1 subfamily. Homotrimer. Heterotrimer; with other ASIC proteins producing channel with different properties. As to expression, expressed in central nervous system.

The protein localises to the cell membrane. Its subcellular location is the postsynaptic cell membrane. The protein resides in the cell projection. It localises to the dendrite. The catalysed reaction is Na(+)(in) = Na(+)(out). It catalyses the reaction K(+)(in) = K(+)(out). The enzyme catalyses Li(+)(in) = Li(+)(out). It carries out the reaction Ca(2+)(in) = Ca(2+)(out). Its activity is regulated as follows. Inhibited by the diuretic drug amiloride. Functionally, forms voltage-independent, pH-gated trimeric sodium channels that act as postsynaptic excitatory receptors in the nervous system, playing a crucial role in regulating synaptic plasticity, learning, and memory. Upon extracellular pH drop this channel elicits transient, fast activating, and completely desensitizing inward currents. Displays high selectivity for sodium ions but can also permit the permeation of other cations. This Danio rerio (Zebrafish) protein is Acid-sensing ion channel 1B (asic1b).